Consider the following 512-residue polypeptide: Probable DNA ligase (512 aa).

Position 217 (D217) interacts with ATP. The active-site N6-AMP-lysine intermediate is K219. R224, R239, E268, F306, R377, and K383 together coordinate ATP.

The protein belongs to the ATP-dependent DNA ligase family. Mg(2+) serves as cofactor.

It catalyses the reaction ATP + (deoxyribonucleotide)n-3'-hydroxyl + 5'-phospho-(deoxyribonucleotide)m = (deoxyribonucleotide)n+m + AMP + diphosphate.. Functionally, DNA ligase that seals nicks in double-stranded DNA during DNA replication, DNA recombination and DNA repair. This is Probable DNA ligase from Beutenbergia cavernae (strain ATCC BAA-8 / DSM 12333 / CCUG 43141 / JCM 11478 / NBRC 16432 / NCIMB 13614 / HKI 0122).